Consider the following 279-residue polypeptide: Tryptophan 2,3-dioxygenase (279 aa).

Substrate is bound by residues 48-52 (FIVIH), tyrosine 110, and arginine 114. Histidine 237 lines the heme pocket. Threonine 251 provides a ligand contact to substrate.

This sequence belongs to the tryptophan 2,3-dioxygenase family. As to quaternary structure, homotetramer. Heme is required as a cofactor.

It catalyses the reaction L-tryptophan + O2 = N-formyl-L-kynurenine. It participates in amino-acid degradation; L-tryptophan degradation via kynurenine pathway; L-kynurenine from L-tryptophan: step 1/2. Heme-dependent dioxygenase that catalyzes the oxidative cleavage of the L-tryptophan (L-Trp) pyrrole ring and converts L-tryptophan to N-formyl-L-kynurenine. Catalyzes the oxidative cleavage of the indole moiety. The protein is Tryptophan 2,3-dioxygenase of Bacillus thuringiensis (strain Al Hakam).